The primary structure comprises 163 residues: HTH-type transcriptional regulator IscR (163 aa).

Positions 2–131 (RLTSKGRYAV…NNITLGELVN (130 aa)) constitute an HTH rrf2-type domain. The H-T-H motif DNA-binding region spans 28-51 (LADISERQGISLSYLEQLFSRLRK). [2Fe-2S] cluster contacts are provided by Cys-92, Cys-98, and Cys-104.

[2Fe-2S] cluster is required as a cofactor.

Regulates the transcription of several operons and genes involved in the biogenesis of Fe-S clusters and Fe-S-containing proteins. The polypeptide is HTH-type transcriptional regulator IscR (Klebsiella pneumoniae subsp. pneumoniae (strain ATCC 700721 / MGH 78578)).